Consider the following 508-residue polypeptide: Maturase K (508 aa).

Belongs to the intron maturase 2 family. MatK subfamily.

Its subcellular location is the plastid. It localises to the chloroplast. In terms of biological role, usually encoded in the trnK tRNA gene intron. Probably assists in splicing its own and other chloroplast group II introns. The sequence is that of Maturase K from Amburana cearensis (Cerejeira).